A 260-amino-acid chain; its full sequence is Triosephosphate isomerase (260 aa).

11–13 provides a ligand contact to substrate; sequence NWK. Catalysis depends on H103, which acts as the Electrophile. E175 functions as the Proton acceptor in the catalytic mechanism. Substrate contacts are provided by residues G181, S220, and 241-242; that span reads GG.

This sequence belongs to the triosephosphate isomerase family. As to quaternary structure, homodimer.

The protein localises to the cytoplasm. The enzyme catalyses D-glyceraldehyde 3-phosphate = dihydroxyacetone phosphate. The protein operates within carbohydrate biosynthesis; gluconeogenesis. Its pathway is carbohydrate degradation; glycolysis; D-glyceraldehyde 3-phosphate from glycerone phosphate: step 1/1. Involved in the gluconeogenesis. Catalyzes stereospecifically the conversion of dihydroxyacetone phosphate (DHAP) to D-glyceraldehyde-3-phosphate (G3P). The chain is Triosephosphate isomerase from Shewanella woodyi (strain ATCC 51908 / MS32).